The sequence spans 365 residues: Poly(rC)-binding protein 2 (365 aa).

KH domains lie at 13–75 and 97–162; these read TLTI…FAMI and PVTL…VKQI. Lys-115 is covalently cross-linked (Glycyl lysine isopeptide (Lys-Gly) (interchain with G-Cter in SUMO2)). At Ser-173 the chain carries Phosphoserine. Lys-185 participates in a covalent cross-link: Glycyl lysine isopeptide (Lys-Gly) (interchain with G-Cter in SUMO2). Phosphoserine is present on residues Ser-189 and Ser-272. In terms of domain architecture, KH 3 spans 287-351; the sequence is TTSHELTIPN…ASISLAQYLI (65 aa). A Glycyl lysine isopeptide (Lys-Gly) (interchain with G-Cter in SUMO2) cross-link involves residue Lys-322. Residues Ser-364 and Ser-365 each carry the phosphoserine modification.

Identified in a mRNP complex, at least composed of DHX9, DDX3X, ELAVL1, HNRNPU, IGF2BP1, ILF3, PABPC1, PCBP2, PTBP2, STAU1, STAU2, SYNCRIP and YBX1. Interacts with IFIH1 and RNF135. Interacts with MAVS (via C-terminus) and ITCH (via WW domains). Interacts with CGAS; preventing the formation of liquid-like droplets in which CGAS is activated. Phosphorylated. The non-phosphorylated form(s) exhibited the strongest poly(rC)-binding activity. Post-translationally, (Microbial infection) Proteolytically cleaved by picornavirus proteinase 3CD. In terms of tissue distribution, detected in all tissues examined.

It localises to the nucleus. The protein localises to the cytoplasm. In terms of biological role, single-stranded nucleic acid binding protein that binds preferentially to oligo dC. Major cellular poly(rC)-binding protein. Also binds poly(rU). Acts as a negative regulator of antiviral signaling. Negatively regulates cellular antiviral responses mediated by MAVS signaling. It acts as an adapter between MAVS and the E3 ubiquitin ligase ITCH, therefore triggering MAVS ubiquitination and degradation. Negativeley regulates the cGAS-STING pathway via interaction with CGAS, preventing the formation of liquid-like droplets in which CGAS is activated. Together with PCBP1, required for erythropoiesis, possibly by regulating mRNA splicing. Functionally, (Microbial infection) In case of infection by poliovirus, binds to the viral internal ribosome entry site (IRES) and stimulates the IRES-mediated translation. Also plays a role in initiation of viral RNA replication in concert with the viral protein 3CD. This Homo sapiens (Human) protein is Poly(rC)-binding protein 2.